We begin with the raw amino-acid sequence, 715 residues long: Putative membrane protein IgaA homolog (715 aa).

Helical transmembrane passes span 2–22, 214–234, 235–255, 349–369, and 663–683; these read STIVLILALLLTSLIAVGLLW, EACAICIALLLLFFALSGPTV, TLPWLVIVAVSLTCWACWYLF, NLTLIVGSLLVLVLLLIYVPL, and ATSLLLLVLIFCLVVNMVLLI.

This sequence belongs to the IgaA family.

The protein localises to the cell inner membrane. This Yersinia pestis protein is Putative membrane protein IgaA homolog.